The chain runs to 128 residues: Nanos homolog 1 (128 aa).

The essential for its translational repressor activity stretch occupies residues 7-23; that stretch reads FNSWSDYLGLSSLISRG. A disordered region spans residues 23-58; sequence GLQPREGGESPRPRWKASSPTPAEPLPSKAAEAHGH. Residues 60-114 form a Nanos-type zinc finger; the sequence is GCGFCRSNREAQSLYSSHRLRAPDGRVLCPVLRGYTCPLCGANGDWAHTMRYCPL. Zn(2+)-binding residues include Cys-61, Cys-64, His-77, Cys-88, Cys-96, Cys-99, His-107, and Cys-112. Short sequence motifs (C2HC) lie at residues 61 to 88 and 96 to 112; these read CGFCRSNREAQSLYSSHRLRAPDGRVLC and CPLCGANGDWAHTMRYC.

The protein belongs to the nanos family. Interacts with ccnb1.

It localises to the cytoplasm. It is found in the perinuclear region. Acts as a translational repressor. Can mediate repression affecting different steps in the translation process: cap-driven, IRES-driven, polyadenylated RNAs or nonpolyadenylated RNAs. Essential for the development of primordial germ cells (PGCs) by ensuring their proper migration and survival. The polypeptide is Nanos homolog 1 (nanos1) (Xenopus tropicalis (Western clawed frog)).